A 159-amino-acid polypeptide reads, in one-letter code: Phosphopantetheine adenylyltransferase (159 aa).

A substrate-binding site is contributed by Ser-8. Residues 8 to 9 (SF) and His-16 contribute to the ATP site. The substrate site is built by Lys-40, Val-72, and Arg-86. Residues 87 to 89 (GVR), Glu-97, and 122 to 128 (YAALRSS) contribute to the ATP site.

Belongs to the bacterial CoaD family. In terms of assembly, homohexamer. Mg(2+) serves as cofactor.

It localises to the cytoplasm. The catalysed reaction is (R)-4'-phosphopantetheine + ATP + H(+) = 3'-dephospho-CoA + diphosphate. Its pathway is cofactor biosynthesis; coenzyme A biosynthesis; CoA from (R)-pantothenate: step 4/5. In terms of biological role, reversibly transfers an adenylyl group from ATP to 4'-phosphopantetheine, yielding dephospho-CoA (dPCoA) and pyrophosphate. The sequence is that of Phosphopantetheine adenylyltransferase from Treponema pallidum (strain Nichols).